Consider the following 527-residue polypeptide: UDP-glucuronosyltransferase 2A3 (527 aa).

Residues 1 to 23 (MRSDKSALVFLLLQLFCVGCGFC) form the signal peptide. Over 24–491 (GKVLVWPCDM…TWFQHYSIDV (468 aa)) the chain is Extracellular. N313 carries N-linked (GlcNAc...) asparagine glycosylation. The chain crosses the membrane as a helical span at residues 492–512 (IGFLLACVATAIFLFTKCFLF). The Cytoplasmic portion of the chain corresponds to 513–527 (SCQKFNKTRKIEKRE).

It belongs to the UDP-glycosyltransferase family.

It is found in the membrane. It catalyses the reaction glucuronate acceptor + UDP-alpha-D-glucuronate = acceptor beta-D-glucuronoside + UDP + H(+). Functionally, UDP-glucuronosyltransferases catalyze phase II biotransformation reactions in which lipophilic substrates are conjugated with glucuronic acid to increase water solubility and enhance excretion. They are of major importance in the conjugation and subsequent elimination of potentially toxic xenobiotics and endogenous compounds. The sequence is that of UDP-glucuronosyltransferase 2A3 (UGT2A3) from Homo sapiens (Human).